A 618-amino-acid polypeptide reads, in one-letter code: UvrABC system protein C (618 aa).

Residues 13–92 (DKPGVYLMKN…IKKYRPKYNI (80 aa)) form the GIY-YIG domain. Positions 204-239 (LDIVENFKLNMERAAENLEFEKAAMLRDKINIIEKI) constitute a UVR domain.

Belongs to the UvrC family. Interacts with UvrB in an incision complex.

The protein resides in the cytoplasm. In terms of biological role, the UvrABC repair system catalyzes the recognition and processing of DNA lesions. UvrC both incises the 5' and 3' sides of the lesion. The N-terminal half is responsible for the 3' incision and the C-terminal half is responsible for the 5' incision. In Clostridium botulinum (strain Langeland / NCTC 10281 / Type F), this protein is UvrABC system protein C.